A 227-amino-acid polypeptide reads, in one-letter code: MMAAGTALGLALWLLLPPVGVGGAGPPPIQDGEFTFLLPAGRKQCFYQSAPANASLETEYQVIGGAGLDVDFSLESPQGVLLVSESRKADGVHTVEPTEAGDYKLCFDNSFSTISEKLVFFELIFDSLQDEEEVEGWAEAVEPEEILEVKMEDIKESIETMRIRLERSIQVLTLLRAFEARDRNLQEGNLERVNFWSAVNVAVLLLVAVLQVCTLKRFFQDKRPVPM.

The N-terminal stretch at 1-23 (MMAAGTALGLALWLLLPPVGVGG) is a signal peptide. Residues 24-194 (AGPPPIQDGE…LQEGNLERVN (171 aa)) lie on the Extracellular side of the membrane. The GOLD domain maps to 43 to 125 (KQCFYQSAPA…EKLVFFELIF (83 aa)). Residues 145 to 170 (EILEVKMEDIKESIETMRIRLERSIQ) adopt a coiled-coil conformation. The helical transmembrane segment at 195-215 (FWSAVNVAVLLLVAVLQVCTL) threads the bilayer. The Cytoplasmic portion of the chain corresponds to 216 to 227 (KRFFQDKRPVPM). The short motif at 218 to 219 (FF) is the COPII vesicle coat-binding element. The COPI vesicle coat-binding signature appears at 218 to 227 (FFQDKRPVPM).

This sequence belongs to the EMP24/GP25L family. In terms of assembly, homodimer in endoplasmic reticulum, endoplasmic reticulum-Golgi intermediate compartment and cis-Golgi network. Interacts with IL1RL1. Interacts with RNF26; this interaction is important to modulate innate immune signaling through the cGAS-STING pathway.

It is found in the cell membrane. Its subcellular location is the endoplasmic reticulum membrane. It localises to the golgi apparatus. The protein resides in the cis-Golgi network membrane. The protein localises to the endoplasmic reticulum-Golgi intermediate compartment membrane. Potential role in vesicular protein trafficking, mainly in the early secretory pathway. May act as a cargo receptor at the lumenal side for incorporation of secretory cargo molecules into transport vesicles and may be involved in vesicle coat formation at the cytoplasmic side. Plays a positive role in IL-33-mediated IL-8 and IL-6 production by interacting with interleukin-33 receptor IL1RL1. Plays also a role in the modulation of innate immune signaling through the cGAS-STING pathway by interacting with RNF26. The protein is Transmembrane emp24 domain-containing protein 1 (TMED1) of Bos taurus (Bovine).